The following is a 65-amino-acid chain: Large ribosomal subunit protein bL35 (65 aa).

It belongs to the bacterial ribosomal protein bL35 family.

The protein is Large ribosomal subunit protein bL35 of Erwinia tasmaniensis (strain DSM 17950 / CFBP 7177 / CIP 109463 / NCPPB 4357 / Et1/99).